Consider the following 1285-residue polypeptide: Transmembrane channel-like protein 1 (1285 aa).

The interval 1 to 29 is disordered; that stretch reads MQEAARRASLRKEHTPTNEKFGDLSKQDS. Topologically, residues 1–164 are cytoplasmic; sequence MQEAARRASL…KIKRIESHFG (164 aa). A helical membrane pass occupies residues 165–202; sequence SVVSSYFTFLRWIVFVNIMITLIALVFVVLPETLADSV. Residues 203–260 are Extracellular-facing; the sequence is ANEGRFNRTKTRKQIPANERVHADELAVVWHYDGYLRYSPLFYGYYSDDPFLGNKIKY. The N-linked (GalNAc...) asparagine glycan is linked to Asn-209. Residues 261-292 form a helical membrane-spanning segment; the sequence is ALPLAYFMVTLTIFAYSFFAILRKMAANARMS. The Cytoplasmic segment spans residues 293–349; it reads KLSGSKAEQYIFNWKLFTGWDYTIGNSETASNTVMAVVIKLRESIADIKKDAHGKFR. Residues 350–381 traverse the membrane as a helical segment; it reads LLQFSLRVFANIIICAMLGFSIYCIIFAVQKS. Over 382–388 the chain is Extracellular; sequence QVQDDGN. The helical transmembrane segment at 389 to 416 threads the bilayer; it reads LFTKNQVPSVVSTITHVFPMIFDLIGKM. Residues 417 to 420 lie on the Cytoplasmic side of the membrane; sequence ENYH. Residues 421–455 traverse the membrane as a helical segment; sequence PRTALRAHLGRVLILYTVNYITLIFALFEKMTALR. Over 456 to 667 the chain is Extracellular; that stretch reads DRVNSTSTSS…NHDGHNNDIC (212 aa). A disordered region spans residues 458 to 488; that stretch reads VNSTSTSSSHRTKRQQGGWNPNMQRPPPYAS. An intrachain disulfide couples Cys-667 to Cys-816. Residues 668–705 form a helical membrane-spanning segment; it reads WETIIGQEIVKLVTMDLIFTILSILVIDLFRGLWIKYC. The required for interaction with tmie stretch occupies residues 696 to 720; that stretch reads LFRGLWIKYCSSWWCWDIETTFPEY. Residues 706–724 are Cytoplasmic-facing; it reads SSWWCWDIETTFPEYGEFK. Residues 725–745 traverse the membrane as a helical segment; the sequence is VAENVLHIINNQGMIWLGLFF. The Extracellular portion of the chain corresponds to 746–748; it reads APL. Residues 749–771 form a helical membrane-spanning segment; it reads LPAINNIKLIILMYIRGWAVMTC. Residues 766-773 are required for interaction with tmie; it reads WAVMTCNV. Over 772–785 the chain is Cytoplasmic; it reads NVPAREIFRASRSS. Residues 786 to 809 traverse the membrane as a helical segment; it reads NFYLGILLIWLLLCTLPVGFVIAS. At 810–852 the chain is on the extracellular side; the sequence is MSPSRSCGPFARYQHFYTVVTREIEKRVDQTVLSYIRHIASPG. A helical membrane pass occupies residues 853 to 886; the sequence is VVIPIILFLILIIYFLFSLVRGLREANTDLQAQL. Residues 887-1285 are Cytoplasmic-facing; that stretch reads VHERTEEKKK…DEDDSPRQID (399 aa). Disordered stretches follow at residues 940-962 and 1114-1285; these read ADHA…DDER and TIKE…RQID. The span at 948–961 shows a compositional bias: acidic residues; the sequence is SSEESDINEDEDDE. Composition is skewed to basic and acidic residues over residues 1121-1131, 1146-1156, and 1167-1182; these read DPGKSDKKQTS, DEARALREKMK, and TVEE…ESEF. Acidic residues predominate over residues 1197 to 1208; it reads TEEENEEEETDS.

It belongs to the TMC family. As to quaternary structure, homodimer. Interacts with calm-1 and tmie to form the MET channel. Expressed in the ASH polymodal avoidance neurons. Also expressed in other sensory neurons, including the ADF, ASE, ADL, AQR, PQR, URX and PHA cells.

Its subcellular location is the cell membrane. The catalysed reaction is Na(+)(in) = Na(+)(out). It catalyses the reaction Ca(2+)(in) = Ca(2+)(out). The enzyme catalyses K(+)(in) = K(+)(out). In terms of biological role, pore-forming subunit of the mechanotransducer (MET) non-selective cation channel complex. The MET complex is composed of symmetric dimeric MET channels, each channel comprising two copies of pore-forming ion-conducting transmembrane TMC subunits and auxiliary proteins including the transmembrane inner ear protein/tmie, the calcium-binding protein/calm-1 and arrestin domain protein arrd-6. Sodium ions are the most permeable, whereas calcium and potassium have lower indices. Sodium-sensor ion channel that acts specifically in salt taste chemosensation. Required for salt-evoked neuronal activity and behavioral avoidance of high concentrations of NaCl. The protein is Transmembrane channel-like protein 1 (tmc-1) of Caenorhabditis elegans.